Reading from the N-terminus, the 41-residue chain is uncharacterized protein (41 aa).

A helical transmembrane segment spans residues 8 to 28; that stretch reads IKKIAMFFLGILVGVFIVLFF.

The protein resides in the membrane. This is an uncharacterized protein from Streptococcus pneumoniae serotype 2 (strain D39 / NCTC 7466).